The sequence spans 564 residues: Large neutral amino acids transporter small subunit 3 (564 aa).

A helical membrane pass occupies residues 20 to 40 (VVENLFFSAVLLGWASLLIML). Asn54 and Asn57 each carry an N-linked (GlcNAc...) asparagine glycan. The next 5 membrane-spanning stretches (helical) occupy residues 78 to 98 (LGFTIGSFLLSATTLPLGILM), 105 to 124 (PLRLVGSACFAASCTLMALA), 131 to 151 (LSPLIFLALSLNGFAGICLTF), 165 to 185 (STFMALMIGSYASSAITFPGI), and 191 to 211 (AGVPFTVIMFTWSGLACLIFL). Residues Ser262 and Ser267 each carry the phosphoserine modification. Transmembrane regions (helical) follow at residues 303-323 (IFLWSLVTMGMTQLRVIFYMG) and 357-377 (SIFGVMQLLCLLTCPLIGYIM). The N-linked (GlcNAc...) asparagine glycan is linked to Asn396. A Phosphoserine modification is found at Ser398. 4 consecutive transmembrane segments (helical) span residues 424–444 (AINAFTLTNILLVGFGIACLI), 451–471 (LLAFVLHTIVRGFFHSACGGL), 490–510 (LISAVFALLQQLLFMAMVGPL), and 515–535 (FWVNLGLLLLSFLGFLLPSYL). The N-linked (GlcNAc...) asparagine glycan is linked to Asn558.

The protein belongs to the SLC43A transporter (TC 2.A.1.44) family. In terms of tissue distribution, expressed in the kidney cortex as well as liver, pancreas, and skeletal muscle. In kidney expressed in the glomerular tuft (at protein level). Expressed in liver, skeletal muscle and pancreas (at protein level).

The protein localises to the cell membrane. Its subcellular location is the apical cell membrane. It is found in the endoplasmic reticulum membrane. The enzyme catalyses D-leucine(in) = D-leucine(out). It carries out the reaction L-leucine(in) = L-leucine(out). It catalyses the reaction L-isoleucine(in) = L-isoleucine(out). The catalysed reaction is L-methionine(in) = L-methionine(out). The enzyme catalyses L-phenylalanine(in) = L-phenylalanine(out). It carries out the reaction L-valine(in) = L-valine(out). In terms of biological role, uniport that mediates the transport of neutral amino acids such as L-leucine, L-isoleucine, L-valine, and L-phenylalanine. The transport activity is sodium ions-independent, electroneutral and mediated by a facilitated diffusion. This Mus musculus (Mouse) protein is Large neutral amino acids transporter small subunit 3.